A 359-amino-acid chain; its full sequence is RuBisCO accumulation factor 1 (359 aa).

The N-terminal alpha-helix stretch occupies residues 12 to 195 (LSPEETDALF…RQKIEQLLSD (184 aa)). A C-terminal beta-sheet region spans residues 219–345 (PLLIPVAGSL…VLLVMRPKKI (127 aa)).

The protein belongs to the RAF family. As to quaternary structure, homodimer. Forms an RbcL(8)-Raf1(8) complex. Forms complexes of many stoichiometries with RbcL with and without RbcS. RbcX and Raf1 can bind simultaneously to RbcL.

It is found in the cytoplasm. In terms of biological role, a major RuBisCO chaperone. Acts after GroEL-GroES chaperonin to fold and/or assemble the large subunit of RuBisCO (ccbL, rbcL). Cooperates with RbcX in RbcL folding, plays the major role in assembly of dimers into RbcL(8)-Raf1(8) intermediate complexes. RbcS replaces Raf1, leading to holoenzyme formation. Its function is as follows. Raf1 and RbcX are probably functionally redundant; it has been suggested they may cooperate. In Picosynechococcus sp. (strain ATCC 27264 / PCC 7002 / PR-6) (Agmenellum quadruplicatum), this protein is RuBisCO accumulation factor 1.